A 380-amino-acid chain; its full sequence is uncharacterized protein (380 aa).

A coiled-coil region spans residues 256-301 (DKEEKIQKSYQYQTELITELQGRIAELEKENQSLKENVKEPETSKP).

This is an uncharacterized protein from Pasteurella multocida (strain Pm70).